Reading from the N-terminus, the 200-residue chain is Dephospho-CoA kinase (200 aa).

The region spanning 6–200 (AIALSGGIAT…KIKAKYLEKK (195 aa)) is the DPCK domain. 14–19 (ATGKST) is an ATP binding site.

Belongs to the CoaE family.

It localises to the cytoplasm. The catalysed reaction is 3'-dephospho-CoA + ATP = ADP + CoA + H(+). It participates in cofactor biosynthesis; coenzyme A biosynthesis; CoA from (R)-pantothenate: step 5/5. Catalyzes the phosphorylation of the 3'-hydroxyl group of dephosphocoenzyme A to form coenzyme A. The polypeptide is Dephospho-CoA kinase (Sulfurimonas denitrificans (strain ATCC 33889 / DSM 1251) (Thiomicrospira denitrificans (strain ATCC 33889 / DSM 1251))).